A 238-amino-acid polypeptide reads, in one-letter code: Transcriptional activator protein AnoR (238 aa).

The 67-residue stretch at 170 to 236 (EFSQFNLYLT…SAAIRAVMLG (67 aa)) folds into the HTH luxR-type domain. A DNA-binding region (H-T-H motif) is located at residues 195 to 214 (SAEIAQIIGVTERTVNFHLC).

The protein belongs to the autoinducer-regulated transcriptional regulatory protein family.

In terms of biological role, positively regulates the expression of anoI. Required for biofilm formation and motility. Probably part of a quorum-sensing system with AnoI. The protein is Transcriptional activator protein AnoR of Acinetobacter nosocomialis.